A 271-amino-acid polypeptide reads, in one-letter code: Hydroxyethylthiazole kinase (271 aa).

M45 contacts substrate. Residues R121 and T168 each coordinate ATP. Position 195 (G195) interacts with substrate.

Belongs to the Thz kinase family. Requires Mg(2+) as cofactor.

It carries out the reaction 5-(2-hydroxyethyl)-4-methylthiazole + ATP = 4-methyl-5-(2-phosphooxyethyl)-thiazole + ADP + H(+). Its pathway is cofactor biosynthesis; thiamine diphosphate biosynthesis; 4-methyl-5-(2-phosphoethyl)-thiazole from 5-(2-hydroxyethyl)-4-methylthiazole: step 1/1. Functionally, catalyzes the phosphorylation of the hydroxyl group of 4-methyl-5-beta-hydroxyethylthiazole (THZ). The sequence is that of Hydroxyethylthiazole kinase from Bacillus pumilus (strain SAFR-032).